The sequence spans 876 residues: Monofunctional isopimaradiene synthase, chloroplastic (876 aa).

The N-terminal 64 residues, 1 to 64 (MAMPSYSSLS…YLRLGSRKII (64 aa)), are a transit peptide targeting the chloroplast. Residues D628, D632, N772, T776, and E780 each coordinate Mg(2+). A DDXXD motif motif is present at residues 628–632 (DDLYD).

The protein belongs to the terpene synthase family. Tpsd subfamily. It depends on Mg(2+) as a cofactor.

It localises to the plastid. Its subcellular location is the chloroplast. It carries out the reaction (+)-copalyl diphosphate = isopimara-7,15-diene + diphosphate. Its pathway is terpene metabolism; oleoresin biosynthesis. In terms of biological role, involved in defensive oleoresin formation in conifers in response to insect attack or other injury. Involved in diterpene (C20) olefins biosynthesis. Monofunctional enzyme lacking the DXDD motif in the class II active site relevant for the cyclization of geranylgeranyl diphosphate (GGPP). Requires (+)-copalyl diphosphate ((+)-CPP) as substrate, but no activity with GGPP or ent-CPP. Isopimaradiene is the major products of the enzyme followed by sandaracopimaradiene. In Pinus contorta (Shore pine), this protein is Monofunctional isopimaradiene synthase, chloroplastic.